Reading from the N-terminus, the 223-residue chain is MKRTKKINHSSFRKSWSARHLTPVALAVTAVFMLAGCEKSDETVSLYQNADDCSAANPGKAAECTTAYTNAVKEAERTAPKYATREDCVAEFGEGQCQQTPAQAGVAPENQAQAQSSGSFWMPLMAGYMMGRLMGGGMAQQQPLFSSKNPASPAYGQYTDASGKSYGAAQPGRTMNVPKTAMAPKPATTTTVTRGGFGESVAKQSTMQRSAAGSTSSSRSMGG.

The segment at 165-223 is disordered; the sequence is SYGAAQPGRTMNVPKTAMAPKPATTTTVTRGGFGESVAKQSTMQRSAAGSTSSSRSMGG. Composition is skewed to low complexity over residues 177–193 and 209–223; these read VPKTAMAPKPATTTTVT and RSAAGSTSSSRSMGG.

The protein belongs to the UPF0441 family.

This Klebsiella pneumoniae (strain 342) protein is UPF0441 protein KPK_0672.